The chain runs to 591 residues: L-fucose isomerase (591 aa).

Residues E337 and D361 each act as proton acceptor in the active site. The Mn(2+) site is built by E337, D361, and H528.

The protein belongs to the L-fucose isomerase family. Homohexamer. The cofactor is Mn(2+).

Its subcellular location is the cytoplasm. It catalyses the reaction L-fucose = L-fuculose. Its pathway is carbohydrate degradation; L-fucose degradation; L-lactaldehyde and glycerone phosphate from L-fucose: step 1/3. Converts the aldose L-fucose into the corresponding ketose L-fuculose. This is L-fucose isomerase from Klebsiella pneumoniae (strain 342).